The chain runs to 138 residues: UPF0310 protein MAV_1800 (138 aa).

It belongs to the UPF0310 family.

This chain is UPF0310 protein MAV_1800, found in Mycobacterium avium (strain 104).